We begin with the raw amino-acid sequence, 263 residues long: Phosphatidylglycerol--prolipoprotein diacylglyceryl transferase (263 aa).

The next 4 helical transmembrane spans lie at 6–26, 50–70, 85–105, and 112–132; these read VIFS…VLGI, LLTA…VLIY, TWEG…AVII, and IPTF…LFLG. Residue arginine 133 participates in a 1,2-diacyl-sn-glycero-3-phospho-(1'-sn-glycerol) binding. 3 helical membrane-spanning segments follow: residues 169–189, 197–217, and 233–253; these read LYEA…LFFL, GALT…VEFF, and MGQL…LGAL.

The protein belongs to the Lgt family.

The protein localises to the cell membrane. It carries out the reaction L-cysteinyl-[prolipoprotein] + a 1,2-diacyl-sn-glycero-3-phospho-(1'-sn-glycerol) = an S-1,2-diacyl-sn-glyceryl-L-cysteinyl-[prolipoprotein] + sn-glycerol 1-phosphate + H(+). Its pathway is protein modification; lipoprotein biosynthesis (diacylglyceryl transfer). Catalyzes the transfer of the diacylglyceryl group from phosphatidylglycerol to the sulfhydryl group of the N-terminal cysteine of a prolipoprotein, the first step in the formation of mature lipoproteins. This Wolbachia pipientis wMel protein is Phosphatidylglycerol--prolipoprotein diacylglyceryl transferase.